Consider the following 152-residue polypeptide: MGRFIFVSFGLLVVFLSLSGTAADCSSGWSSYEGHCYKVFKQSKTWTDAESFCTKQVNGGHLVSIESSGEADFVGQLIAQKIKSAKIHVWIGLRAQNKEKQCSIEWSDGSSISYENWIEEESKKCLGVHIETGFHKWENFYCEQQDPFVCEA.

The first 23 residues, 1–23, serve as a signal peptide directing secretion; it reads MGRFIFVSFGLLVVFLSLSGTAA. Positions 24 to 152 constitute a C-type lectin domain; the sequence is DCSSGWSSYE…EQQDPFVCEA (129 aa). Cystine bridges form between C25–C36, C53–C150, and C125–C142. Residues S64, E66, and E70 each contribute to the Ca(2+) site. Position 151 (E151) interacts with Ca(2+).

Belongs to the snaclec family. As to quaternary structure, heterodimer with subunit B of AaACP or agkisacutacin; disulfide-linked. As to expression, expressed by the venom gland.

Its subcellular location is the secreted. Anticoagulant protein which binds to the gamma-carboxyglutamic acid-domain regions of factors IX (F9) and factor X (F10) in the presence of calcium with a 1 to 1 stoichiometry. Also inhibits platelet aggregation by binding to platelet glycoprotein Ibalpha (GP1BA) and functioning as a blocker of von Willebrand factor (VWF). Is devoid of hemorrhagic and lethal activities. Possesses antithrombotic and thrombolytic activities. Also hydrolyzes the Aalpha-chain of fibrinogen (FGA). Does not affect the Bbeta-chain (FGB) and the gamma chain (FGG). The polypeptide is Snaclec agkisacutacin subunit A (Deinagkistrodon acutus (Hundred-pace snake)).